A 717-amino-acid chain; its full sequence is Methionine--tRNA ligase (717 aa).

The 'HIGH' region signature appears at 19–29 (PYANGDLHVGH). Residues cysteine 150, cysteine 153, cysteine 162, and cysteine 166 each coordinate Zn(2+). The 'KMSKS' region signature appears at 356 to 360 (ALSTS). Threonine 359 lines the ATP pocket. The interval 573 to 603 (ERVEEASEASAEASNEGGEAAGDEVDDGDVD) is disordered. The segment covering 580 to 590 (EASAEASNEGG) has biased composition (low complexity). The segment covering 593–603 (AGDEVDDGDVD) has biased composition (acidic residues). One can recognise a tRNA-binding domain in the interval 619–717 (DFEGVDMRVG…EDAPLGTRIK (99 aa)).

This sequence belongs to the class-I aminoacyl-tRNA synthetase family. MetG type 1 subfamily. As to quaternary structure, homodimer. Requires Zn(2+) as cofactor.

It localises to the cytoplasm. It catalyses the reaction tRNA(Met) + L-methionine + ATP = L-methionyl-tRNA(Met) + AMP + diphosphate. In terms of biological role, is required not only for elongation of protein synthesis but also for the initiation of all mRNA translation through initiator tRNA(fMet) aminoacylation. The protein is Methionine--tRNA ligase of Haloarcula marismortui (strain ATCC 43049 / DSM 3752 / JCM 8966 / VKM B-1809) (Halobacterium marismortui).